A 316-amino-acid polypeptide reads, in one-letter code: Protein C4 (316 aa).

This sequence belongs to the poxviridae OPG031 protein family.

It localises to the host cytoplasm. It is found in the host nucleus. Plays a role in the inhibition of host NF-kappa-B activation. Mechanistically, blocks the subunit p65/RELA translocation into the host nucleus. The polypeptide is Protein C4 (OPG031) (Vaccinia virus (strain Western Reserve) (VACV)).